The primary structure comprises 596 residues: Phosphoenolpyruvate carboxykinase [GTP] (596 aa).

Substrate is bound by residues Arg-77 and 205–207 (YGG). Lys-214 and His-234 together coordinate Mn(2+). Ser-256 contacts substrate. Residue 257–262 (ACGKTN) coordinates GTP. The active site involves Cys-258. A Mn(2+)-binding site is contributed by Asp-283. The segment at 362–388 (KKGSTEKAAHPNSRFTAPAKNNPAISP) is disordered. Position 373 to 375 (373 to 375 (NSR)) interacts with substrate. GTP-binding positions include Arg-375, Arg-406, and 499–502 (YGDN).

The protein belongs to the phosphoenolpyruvate carboxykinase [GTP] family. In terms of assembly, monomer. Requires Mn(2+) as cofactor.

The protein localises to the cytoplasm. The catalysed reaction is oxaloacetate + GTP = phosphoenolpyruvate + GDP + CO2. It participates in carbohydrate biosynthesis; gluconeogenesis. Functionally, catalyzes the conversion of oxaloacetate (OAA) to phosphoenolpyruvate (PEP), the rate-limiting step in the metabolic pathway that produces glucose from lactate and other precursors derived from the citric acid cycle. This Anaeromyxobacter dehalogenans (strain 2CP-1 / ATCC BAA-258) protein is Phosphoenolpyruvate carboxykinase [GTP].